The following is a 314-amino-acid chain: tRNA pseudouridine synthase B (314 aa).

Histidine 43 serves as a coordination point for substrate. Aspartate 48 (nucleophile) is an active-site residue. Substrate-binding residues include tyrosine 76, tyrosine 179, and leucine 200.

The protein belongs to the pseudouridine synthase TruB family. Type 1 subfamily.

It carries out the reaction uridine(55) in tRNA = pseudouridine(55) in tRNA. Its function is as follows. Responsible for synthesis of pseudouridine from uracil-55 in the psi GC loop of transfer RNAs. This Pectobacterium atrosepticum (strain SCRI 1043 / ATCC BAA-672) (Erwinia carotovora subsp. atroseptica) protein is tRNA pseudouridine synthase B.